A 64-amino-acid chain; its full sequence is DNA gyrase inhibitor YacG (64 aa).

Residues cysteine 9, cysteine 12, cysteine 28, and cysteine 32 each coordinate Zn(2+). A disordered region spans residues 45-64 (KRIPSAGDLSDSDDWSEQQP). Acidic residues predominate over residues 54-64 (SDSDDWSEQQP).

This sequence belongs to the DNA gyrase inhibitor YacG family. In terms of assembly, interacts with GyrB. It depends on Zn(2+) as a cofactor.

Inhibits all the catalytic activities of DNA gyrase by preventing its interaction with DNA. Acts by binding directly to the C-terminal domain of GyrB, which probably disrupts DNA binding by the gyrase. This is DNA gyrase inhibitor YacG from Klebsiella pneumoniae (strain 342).